We begin with the raw amino-acid sequence, 89 residues long: HssA/B-like protein 22 (89 aa).

The protein belongs to the hssA/B family.

The polypeptide is HssA/B-like protein 22 (hssl22) (Dictyostelium discoideum (Social amoeba)).